Reading from the N-terminus, the 260-residue chain is Indole-3-glycerol phosphate synthase (260 aa).

The protein belongs to the TrpC family.

The enzyme catalyses 1-(2-carboxyphenylamino)-1-deoxy-D-ribulose 5-phosphate + H(+) = (1S,2R)-1-C-(indol-3-yl)glycerol 3-phosphate + CO2 + H2O. It functions in the pathway amino-acid biosynthesis; L-tryptophan biosynthesis; L-tryptophan from chorismate: step 4/5. This Chloroherpeton thalassium (strain ATCC 35110 / GB-78) protein is Indole-3-glycerol phosphate synthase.